Here is a 269-residue protein sequence, read N- to C-terminus: GTP cyclohydrolase FolE2 2 (269 aa).

The protein belongs to the GTP cyclohydrolase IV family.

It catalyses the reaction GTP + H2O = 7,8-dihydroneopterin 3'-triphosphate + formate + H(+). It functions in the pathway cofactor biosynthesis; 7,8-dihydroneopterin triphosphate biosynthesis; 7,8-dihydroneopterin triphosphate from GTP: step 1/1. Functionally, converts GTP to 7,8-dihydroneopterin triphosphate. In Burkholderia lata (strain ATCC 17760 / DSM 23089 / LMG 22485 / NCIMB 9086 / R18194 / 383), this protein is GTP cyclohydrolase FolE2 2.